Consider the following 1728-residue polypeptide: Nebulin-related-anchoring protein (1728 aa).

The LIM zinc-binding domain maps to 4–64 (QACSRCGYGV…HAHNPKNNTF (61 aa)). Nebulin repeat units follow at residues 173–200 (TPAY…ERVS), 201–235 (TFTP…QQRG), 244–271 (TPAY…REMK), 313–340 (TPAY…KMKG), 345–379 (HSLA…NSKG), 386–414 (ETPQ…TQLR), 416–450 (HYDG…HDVV), 484–518 (KFSS…RNKL), 519–553 (NYTL…KTKG), 555–589 (GFEM…KMKG), 599–623 (LLHS…ESKT), 624–658 (HFNL…DYTV), 659–689 (LPED…WMRG), 699–721 (NLEQ…RVDE), 723–757 (KFTS…QSVH), 758–792 (QYTI…KQKA), 794–828 (GFEL…RSRG), 841–866 (QMSH…DTRS), 867–893 (QCHI…VGYR), 898–932 (CFTA…WMKG), 943–960 (VEQA…KYRQ), 966–1000 (KFTS…NVKH), 1001–1035 (HYTQ…RLRD), 1037–1071 (GYKL…RMKG), 1075–1109 (GSRS…HAKA), 1110–1136 (HFHL…QDYR), 1141–1175 (QHTV…FMRG), 1180–1203 (VPGT…KYRQ), 1209–1243 (KYTA…DARH), 1244–1278 (QYTM…NLRA), 1280–1314 (GYKL…KERG), 1318–1352 (GVRN…SSQA), 1353–1379 (QCHL…HDYR), 1384–1418 (EFTA…GMKG), 1425–1446 (QSPQ…KYRK), 1452–1478 (KFTT…RLYR), 1487–1521 (RYTP…QSRA), 1523–1557 (GYDF…RDRG), 1561–1595 (GYRS…KGRS), 1596–1630 (QFHS…QHTS), and 1637–1661 (LKHA…LTRG). The residue at position 203 (threonine 203) is a Phosphothreonine. Residue serine 1078 is modified to Phosphoserine.

As to quaternary structure, interacts with actin, alpha-actinin, KLHL41, TLN1 and VCL. Interacts with CSRP3. In terms of tissue distribution, expressed in cardiac and skeletal muscle. Not detected in kidney, spleen, liver, brain, lung, stomach or uterus.

In terms of biological role, may be involved in anchoring the terminal actin filaments in the myofibril to the membrane and in transmitting tension from the myofibrils to the extracellular matrix. The chain is Nebulin-related-anchoring protein from Mus musculus (Mouse).